A 334-amino-acid chain; its full sequence is MAKIAINGFGRIGRLALRRILEVPGLEVVAINDLTDAKMLAHLFKYDSSQGRFNGEIEVKEGAFVVNGKEVKVFAEADPEKLPWGDLGIDVVLECTGFFTKKEKAEAHVRAGAKKVVISAPAGNDLKTIVFNVNNEDLDGTETVISGASCTTNCLAPMAKVLNDKFGIEKGFMTTIHAFTNDQNTLDGPHRKGDLRRARAAAVSIIPNSTGAAKAISQVIPDLAGKLDGNAQRVPVPTGSITELVSVLKKKVTVEEINAAMKEAADESFGYTEDPIVSADVVGINYGSLFDATLTKIVDVNGSQLVKTAAWYDNEMSYTSQLVRTLAYFAKIAK.

Residues 11–12, Asp-33, and Ser-119 each bind NAD(+); that span reads RI. Residues 149 to 151 and Thr-180 contribute to the D-glyceraldehyde 3-phosphate site; that span reads SCT. Cys-150 serves as the catalytic Nucleophile. NAD(+) is bound at residue Asn-181. D-glyceraldehyde 3-phosphate-binding positions include Arg-197, 210-211, and Arg-233; that span reads TG. NAD(+) is bound at residue Asn-314.

This sequence belongs to the glyceraldehyde-3-phosphate dehydrogenase family. As to quaternary structure, homotetramer.

It is found in the cytoplasm. The enzyme catalyses D-glyceraldehyde 3-phosphate + phosphate + NAD(+) = (2R)-3-phospho-glyceroyl phosphate + NADH + H(+). It functions in the pathway carbohydrate degradation; glycolysis; pyruvate from D-glyceraldehyde 3-phosphate: step 1/5. Its function is as follows. Catalyzes the oxidative phosphorylation of glyceraldehyde 3-phosphate (G3P) to 1,3-bisphosphoglycerate (BPG) using the cofactor NAD. The first reaction step involves the formation of a hemiacetal intermediate between G3P and a cysteine residue, and this hemiacetal intermediate is then oxidized to a thioester, with concomitant reduction of NAD to NADH. The reduced NADH is then exchanged with the second NAD, and the thioester is attacked by a nucleophilic inorganic phosphate to produce BPG. This Clostridium acetobutylicum (strain ATCC 824 / DSM 792 / JCM 1419 / IAM 19013 / LMG 5710 / NBRC 13948 / NRRL B-527 / VKM B-1787 / 2291 / W) protein is Glyceraldehyde-3-phosphate dehydrogenase (gap).